An 847-amino-acid chain; its full sequence is Bifunctional lysine-specific demethylase and histidyl-hydroxylase NO66 (847 aa).

The segment covering 1–24 (MEKVTNSAAAKPQGNNKKQESAYN) has biased composition (polar residues). Disordered stretches follow at residues 1–45 (MEKV…SDLL), 203–223 (AEAD…KESV), and 254–320 (AEKE…ERKQ). Residues 203-214 (AEADAKNNDTKK) are compositionally biased toward basic and acidic residues. The span at 268-278 (STSSKEAAAAK) shows a compositional bias: low complexity. The segment covering 279–288 (TADHERRLLA) has biased composition (basic and acidic residues). The segment covering 304 to 314 (AMESVATQGAS) has biased composition (polar residues). The residue at position 323 (S323) is a Phosphoserine. Phosphothreonine is present on T329. S330 bears the Phosphoserine mark. Residues 377–401 (KAPEEGNNNNDEKEMSTETSETHKT) are disordered. The span at 386 to 401 (NDEKEMSTETSETHKT) shows a compositional bias: basic and acidic residues. In terms of domain architecture, JmjC spans 499 to 644 (CSIRLLNPSA…NLLETLMPMV (146 aa)). Residues H545, D547, and H610 each contribute to the Fe cation site.

Belongs to the ROX family. NO66 subfamily. Fe(2+) serves as cofactor.

The protein resides in the nucleus. The catalysed reaction is N(6),N(6)-dimethyl-L-lysyl(36)-[histone H3] + 2 2-oxoglutarate + 2 O2 = L-lysyl(36)-[histone H3] + 2 formaldehyde + 2 succinate + 2 CO2. Functionally, oxygenase that can act as both a histone lysine demethylase and a ribosomal histidine hydroxylase. Specifically demethylates 'Lys-4' (H3K4me) and 'Lys-36' (H3K36me) of histone H3, thereby playing a central role in histone code. In Drosophila simulans (Fruit fly), this protein is Bifunctional lysine-specific demethylase and histidyl-hydroxylase NO66.